The following is a 388-amino-acid chain: F-box protein At4g00893 (388 aa).

The disordered stretch occupies residues 1–30; that stretch reads MLPSPSVHMASPPPSLNMASHPPSPATASR. The F-box domain occupies 42–88; the sequence is NPSFADLPSSLIEEIMLLLVLKDNIRASAACKSWYEAGVSVRVVDKH.

This is F-box protein At4g00893 from Arabidopsis thaliana (Mouse-ear cress).